Reading from the N-terminus, the 219-residue chain is Uracil-DNA glycosylase (219 aa).

Aspartate 62 (proton acceptor) is an active-site residue.

This sequence belongs to the uracil-DNA glycosylase (UDG) superfamily. UNG family.

Its subcellular location is the cytoplasm. The catalysed reaction is Hydrolyzes single-stranded DNA or mismatched double-stranded DNA and polynucleotides, releasing free uracil.. Functionally, excises uracil residues from the DNA which can arise as a result of misincorporation of dUMP residues by DNA polymerase or due to deamination of cytosine. The polypeptide is Uracil-DNA glycosylase (Lactococcus lactis subsp. cremoris (strain MG1363)).